We begin with the raw amino-acid sequence, 136 residues long: Pterin-4-alpha-carbinolamine dehydratase 2 (136 aa).

Lys-120, Lys-124, and Lys-131 each carry N6-acetyllysine; alternate. N6-succinyllysine; alternate occurs at positions 120, 124, and 131.

The protein belongs to the pterin-4-alpha-carbinolamine dehydratase family. In terms of assembly, homotetramer. Interacts with DYRK1B.

The enzyme catalyses (4aS,6R)-4a-hydroxy-L-erythro-5,6,7,8-tetrahydrobiopterin = (6R)-L-erythro-6,7-dihydrobiopterin + H2O. Its function is as follows. Involved in tetrahydrobiopterin biosynthesis. Seems to both prevent the formation of 7-pterins and accelerate the formation of quinonoid-BH2. Regulates the dimerization of homeodomain protein HNF-1-alpha and enhances its transcriptional activity. This is Pterin-4-alpha-carbinolamine dehydratase 2 (Pcbd2) from Mus musculus (Mouse).